The sequence spans 445 residues: Probable glycine dehydrogenase (decarboxylating) subunit 1 (445 aa).

The protein belongs to the GcvP family. N-terminal subunit subfamily. In terms of assembly, the glycine cleavage system is composed of four proteins: P, T, L and H. In this organism, the P 'protein' is a heterodimer of two subunits.

The catalysed reaction is N(6)-[(R)-lipoyl]-L-lysyl-[glycine-cleavage complex H protein] + glycine + H(+) = N(6)-[(R)-S(8)-aminomethyldihydrolipoyl]-L-lysyl-[glycine-cleavage complex H protein] + CO2. In terms of biological role, the glycine cleavage system catalyzes the degradation of glycine. The P protein binds the alpha-amino group of glycine through its pyridoxal phosphate cofactor; CO(2) is released and the remaining methylamine moiety is then transferred to the lipoamide cofactor of the H protein. The polypeptide is Probable glycine dehydrogenase (decarboxylating) subunit 1 (Anaeromyxobacter dehalogenans (strain 2CP-C)).